A 551-amino-acid chain; its full sequence is Delta-selinene synthase TPS7FN (551 aa).

5 residues coordinate (2E,6E)-farnesyl diphosphate: Arg-266, Asp-303, Asp-307, Arg-444, and Asp-447. Mg(2+) contacts are provided by Asp-303 and Asp-307. A DDXXD motif motif is present at residues Asp-303–Asp-307. 3 residues coordinate Mg(2+): Asp-447, Ser-451, and Glu-455.

Belongs to the terpene synthase family. Tpsb subfamily. Requires Mg(2+) as cofactor. The cofactor is Mn(2+).

The enzyme catalyses (2E,6E)-farnesyl diphosphate = delta-selinene + diphosphate. It catalyses the reaction (2E)-geranyl diphosphate = beta-myrcene + diphosphate. It carries out the reaction (2E)-geranyl diphosphate = (4S)-limonene + diphosphate. The catalysed reaction is (2E,6E)-farnesyl diphosphate + H2O = selina-6-en-4-ol + diphosphate. It participates in secondary metabolite biosynthesis; terpenoid biosynthesis. Functionally, involved in sesquiterpene olefins biosynthesis, constituants of cannabinoids and terpenoids-rich resins. Catalyzes mainly the conversion of (2E)-farnesyl diphosphate to delta-selinene, and also produces minor products such as selina-6-en-4-ol. Can also use (2E)-geranyl diphosphate as substrate with low efficiency, producing minor amounts of myrcene and limonene. The sequence is that of Delta-selinene synthase TPS7FN from Cannabis sativa (Hemp).